We begin with the raw amino-acid sequence, 181 residues long: Adenine phosphoribosyltransferase (181 aa).

It belongs to the purine/pyrimidine phosphoribosyltransferase family. As to quaternary structure, homodimer.

The protein resides in the cytoplasm. The catalysed reaction is AMP + diphosphate = 5-phospho-alpha-D-ribose 1-diphosphate + adenine. The protein operates within purine metabolism; AMP biosynthesis via salvage pathway; AMP from adenine: step 1/1. In terms of biological role, catalyzes a salvage reaction resulting in the formation of AMP, that is energically less costly than de novo synthesis. The sequence is that of Adenine phosphoribosyltransferase from Vibrio cholerae serotype O1 (strain ATCC 39541 / Classical Ogawa 395 / O395).